A 243-amino-acid polypeptide reads, in one-letter code: Pyrimidodiazepine synthase (243 aa).

Positions 20–102 (GILRLYSMRF…YLDEQYPLRP (83 aa)) constitute a GST N-terminal domain. The active-site Nucleophile is Cys-30. Glutathione contacts are provided by residues Lys-57, Val-70, and 86 to 87 (ES). Residues 107-230 (DPLKKVQDKL…VQAEFLRTRS (124 aa)) form the GST C-terminal domain.

The protein belongs to the GST superfamily. Omega family. Homodimer.

The enzyme catalyses 2-amino-6-acetyl-3,7,8,9-tetrahydro-3H-pyrimido[4,5-b][1,4]diazepin-4-one + glutathione disulfide + H2O = 6-pyruvoyl-5,6,7,8-tetrahydropterin + 2 glutathione. Its function is as follows. Mediates the conversion of 2-amino-4-oxo-6-pyruvoyl-5,6,7,8-tetrahydropteridine (6-PTP; also named 6-pyruvoyltetrahydropterin) to 2-amino-6-acetyl-3,7,8,9-tetrahydro-3H-pyrimido(4,5-b)[1,4]diazepin-4-one (pyrimidodiazepine or PDA), a key intermediate in red eye pigment drosopterin biosynthesis. In Drosophila melanogaster (Fruit fly), this protein is Pyrimidodiazepine synthase.